The following is a 488-amino-acid chain: ATP synthase subunit beta, chloroplastic (488 aa).

170 to 177 (GGAGVGKT) provides a ligand contact to ATP.

Belongs to the ATPase alpha/beta chains family. In terms of assembly, F-type ATPases have 2 components, CF(1) - the catalytic core - and CF(0) - the membrane proton channel. CF(1) has five subunits: alpha(3), beta(3), gamma(1), delta(1), epsilon(1). CF(0) has four main subunits: a(1), b(1), b'(1) and c(9-12).

It localises to the plastid. The protein resides in the chloroplast thylakoid membrane. It catalyses the reaction ATP + H2O + 4 H(+)(in) = ADP + phosphate + 5 H(+)(out). Produces ATP from ADP in the presence of a proton gradient across the membrane. The catalytic sites are hosted primarily by the beta subunits. In Picea abies (Norway spruce), this protein is ATP synthase subunit beta, chloroplastic.